The chain runs to 369 residues: MIKVVVVDDSAFMRKALSSMLEKDPGISVVATARNGEEGLEQIRKHDPDVVTLDIEMPRMDGLTALRHIMMEMPRPVLMVSSLTVEGAEATLKAMELGAVDFIPKQLSTVSLDIVKIEKDLQEKVKAISRRRVPGRSFRPAPAVRPAAPAALRATPRPSAAPSSAASSTGTLQVAGGKPVRDVVAIGVSTGGPPAVQKVLSRLPQDFPVGIVIAQHMPAAFTGPFAKRLDGVCAIAVKEAEDGEMLMPGKAYIAPGGKHVRVRNTRGRLTLEVSAEPAEALYKPSANELMESAGLALGRRSLGVILTGMGSDGLEGIKVLKQKGGHALAQSDSTCVVYGMPKAIVDAGLADSVVDIDDMAQAIMNAVYK.

Residues 3 to 120 (KVVVVDDSAF…SLDIVKIEKD (118 aa)) form the Response regulatory domain. Asp-54 carries the post-translational modification 4-aspartylphosphate. The segment covering 136-168 (RSFRPAPAVRPAAPAALRATPRPSAAPSSAASS) has biased composition (low complexity). Residues 136–174 (RSFRPAPAVRPAAPAALRATPRPSAAPSSAASSTGTLQV) are disordered. In terms of domain architecture, CheB-type methylesterase spans 177–369 (GKPVRDVVAI…AQAIMNAVYK (193 aa)). Active-site residues include Ser-189, His-216, and Asp-312.

It belongs to the CheB family. Post-translationally, phosphorylated by CheA. Phosphorylation of the N-terminal regulatory domain activates the methylesterase activity.

The protein resides in the cytoplasm. It carries out the reaction [protein]-L-glutamate 5-O-methyl ester + H2O = L-glutamyl-[protein] + methanol + H(+). The enzyme catalyses L-glutaminyl-[protein] + H2O = L-glutamyl-[protein] + NH4(+). Involved in chemotaxis. Part of a chemotaxis signal transduction system that modulates chemotaxis in response to various stimuli. Catalyzes the demethylation of specific methylglutamate residues introduced into the chemoreceptors (methyl-accepting chemotaxis proteins or MCP) by CheR. Also mediates the irreversible deamidation of specific glutamine residues to glutamic acid. This chain is Protein-glutamate methylesterase/protein-glutamine glutaminase 1, found in Oleidesulfovibrio alaskensis (strain ATCC BAA-1058 / DSM 17464 / G20) (Desulfovibrio alaskensis).